Reading from the N-terminus, the 155-residue chain is Ribosomal RNA large subunit methyltransferase H (155 aa).

Residues leucine 72, glycine 103, and 122 to 127 (LSPLTL) each bind S-adenosyl-L-methionine.

Belongs to the RNA methyltransferase RlmH family. Homodimer.

It is found in the cytoplasm. It carries out the reaction pseudouridine(1915) in 23S rRNA + S-adenosyl-L-methionine = N(3)-methylpseudouridine(1915) in 23S rRNA + S-adenosyl-L-homocysteine + H(+). Its function is as follows. Specifically methylates the pseudouridine at position 1915 (m3Psi1915) in 23S rRNA. This Haemophilus influenzae (strain PittGG) protein is Ribosomal RNA large subunit methyltransferase H.